The primary structure comprises 414 residues: Inositol-tetrakisphosphate 1-kinase (414 aa).

Lys-18 contributes to the 1D-myo-inositol 1,3,4-trisphosphate binding site. Residues Arg-106 and Lys-157 each contribute to the ATP site. The ATP-grasp domain occupies 117–325 (EAYMEDDRIC…IATVLQGQST (209 aa)). His-167 and Lys-199 together coordinate 1D-myo-inositol 1,3,4-trisphosphate. Residues 188–199 (QNFINHNAVLYK), Ser-214, Ser-232, and Ser-236 contribute to the ATP site. 3 residues coordinate Mg(2+): Asp-281, Asp-295, and Asn-297. Asn-297 serves as a coordination point for 1D-myo-inositol 1,3,4-trisphosphate. Residues Lys-340 and Lys-383 each carry the N6-acetyllysine; by EP300 and CREBBP modification. Ser-396 is subject to Phosphoserine. Lys-410 bears the N6-acetyllysine; by EP300 and CREBBP mark.

Belongs to the ITPK1 family. In terms of assembly, monomer. Interacts with GPS1/COPS1. Mg(2+) serves as cofactor. In terms of processing, acetylation by EP300 and CREBBP destabilizes ITPK1, and down-regulates enzymatic activity. Deacetylated by SIRT1. As to expression, expressed in brain &gt; heart &gt; skeletal muscle = kidney = pancreas = liver = placenta &gt; lung. In brain, it is expressed in cerebellum, cerebral cortex, medulla, spinal cord, occipital lobe, frontal lobe, temporal lobe and putamen.

It carries out the reaction 1D-myo-inositol 3,4,5,6-tetrakisphosphate + ATP = 1D-myo-inositol 1,3,4,5,6-pentakisphosphate + ADP + H(+). The catalysed reaction is 1D-myo-inositol 1,3,4-trisphosphate + ATP = 1D-myo-inositol 1,3,4,5-tetrakisphosphate + ADP + H(+). The enzyme catalyses 1D-myo-inositol 1,3,4-trisphosphate + ATP = 1D-myo-inositol 1,3,4,6-tetrakisphosphate + ADP + H(+). It catalyses the reaction 1D-myo-inositol 3,4,6-trisphosphate + ATP = 1D-myo-inositol 1,3,4,6-tetrakisphosphate + ADP + H(+). It carries out the reaction 1D-myo-inositol 1,3,4-trisphosphate + 1D-myo-inositol 1,3,4,5,6-pentakisphosphate = 1D-myo-inositol 3,4,5,6-tetrakisphosphate + 1D-myo-inositol 1,3,4,6-tetrakisphosphate. The catalysed reaction is 1D-myo-inositol 1,3,4-trisphosphate + 1D-myo-inositol 1,3,4,5,6-pentakisphosphate = 1D-myo-inositol 3,4,5,6-tetrakisphosphate + 1D-myo-inositol 1,3,4,5-tetrakisphosphate. Functionally, kinase that can phosphorylate various inositol polyphosphate such as Ins(3,4,5,6)P4 or Ins(1,3,4)P3. Phosphorylates Ins(3,4,5,6)P4 at position 1 to form Ins(1,3,4,5,6)P5. This reaction is thought to have regulatory importance, since Ins(3,4,5,6)P4 is an inhibitor of plasma membrane Ca(2+)-activated Cl(-) channels, while Ins(1,3,4,5,6)P5 is not. Also phosphorylates Ins(1,3,4)P3 on O-5 and O-6 to form Ins(1,3,4,6)P4, an essential molecule in the hexakisphosphate (InsP6) pathway. Also acts as an inositol polyphosphate phosphatase that dephosphorylates Ins(1,3,4,5)P4 and Ins(1,3,4,6)P4 to Ins(1,3,4)P3, and Ins(1,3,4,5,6)P5 to Ins(3,4,5,6)P4. May also act as an isomerase that interconverts the inositol tetrakisphosphate isomers Ins(1,3,4,5)P4 and Ins(1,3,4,6)P4 in the presence of ADP and magnesium. Probably acts as the rate-limiting enzyme of the InsP6 pathway. Modifies TNF-alpha-induced apoptosis by interfering with the activation of TNFRSF1A-associated death domain. Plays an important role in MLKL-mediated necroptosis. Produces highly phosphorylated inositol phosphates such as inositolhexakisphosphate (InsP6) which bind to MLKL mediating the release of an N-terminal auto-inhibitory region leading to its activation. Essential for activated phospho-MLKL to oligomerize and localize to the cell membrane during necroptosis. This Homo sapiens (Human) protein is Inositol-tetrakisphosphate 1-kinase.